The sequence spans 171 residues: Co-chaperone protein HscB (171 aa).

In terms of domain architecture, J spans 2–74; that stretch reads DYFTLFGLPA…LMRAEYLLSL (73 aa).

The protein belongs to the HscB family. As to quaternary structure, interacts with HscA and stimulates its ATPase activity. Interacts with IscU.

In terms of biological role, co-chaperone involved in the maturation of iron-sulfur cluster-containing proteins. Seems to help targeting proteins to be folded toward HscA. This chain is Co-chaperone protein HscB, found in Escherichia coli (strain SE11).